Consider the following 1055-residue polypeptide: TNF receptor-associated factor homolog 1a (1055 aa).

Residues 1-56 are disordered; the sequence is MSESTNEDSGAGRSSLEENSNGQRSQSEEAIAEWRSSEQVENGTPSTSPPYWDIDD. The span at 37–46 shows a compositional bias: polar residues; sequence SEQVENGTPS. The region spanning 68–191 is the MATH domain; the sequence is FGKNTWTIEK…SGCLTIKAQV (124 aa). Disordered stretches follow at residues 352–380, 431–590, 603–772, and 820–845; these read PKKEEKSSQNRTKDGNAGEEFSREAVERD, AESE…NGSY, FSNG…APII, and VGSSGFTHPSSQSSGTSTLPPYSHPS. Residues 433-446 are compositionally biased toward basic and acidic residues; sequence SEQKGKRGASEKEK. Residues 441–496 adopt a coiled-coil conformation; it reads ASEKEKKSKKKQAKQKKNKNKGKEMRKEDKVRTQTEEREIEKEECVRAIAESSAEK. Positions 447 to 460 are enriched in basic residues; the sequence is KSKKKQAKQKKNKN. The segment covering 461–486 has biased composition (basic and acidic residues); the sequence is KGKEMRKEDKVRTQTEEREIEKEECV. Low complexity predominate over residues 502-513; the sequence is DVSDVSDSVDSS. Over residues 524–537 the composition is skewed to basic and acidic residues; that stretch reads RESSPVHWEMDASE. Residues 569–586 are compositionally biased toward polar residues; sequence MDDSSSTCSNDSIQSGVA. Over residues 657–668 the composition is skewed to basic and acidic residues; sequence QKPESPKERSPV. Polar residues-rich tracts occupy residues 723–740 and 823–845; these read KSPSSHHASPSREAQLQT and SGFTHPSSQSSGTSTLPPYSHPS.

As to quaternary structure, interacts with AHK3. Interacts with ATG6, SINAT1, SINAT2, SINAT5 and SINAT6.

The protein resides in the cytoplasm. In terms of biological role, functions redundantly with TRAF1B in the regulation of plant immune response. Contributes to the turnover of the nucleotide-binding domain and leucine-rich repeat-containing (NB-LRR) immune receptors SNC1 and RPS2. May associate with an E3 ubiquitin-protein ligase complex, which modulates ubiquitination and subsequent degradation of NB-LRR immune sensors to maintain their homeostasis. Functions redundantly with TRAF1B in the regulation of autophagosome formation. Required for SINAT1- and SINAT2-mediated ubiquitination and destabilization of ATG6. Functions as a molecular adapter that helps to regulate autophagy by modulating ATG6 stability. The polypeptide is TNF receptor-associated factor homolog 1a (Arabidopsis thaliana (Mouse-ear cress)).